A 417-amino-acid polypeptide reads, in one-letter code: NADH-quinone oxidoreductase subunit D (417 aa).

It belongs to the complex I 49 kDa subunit family. NDH-1 is composed of 14 different subunits. Subunits NuoB, C, D, E, F, and G constitute the peripheral sector of the complex.

It is found in the cell inner membrane. It carries out the reaction a quinone + NADH + 5 H(+)(in) = a quinol + NAD(+) + 4 H(+)(out). NDH-1 shuttles electrons from NADH, via FMN and iron-sulfur (Fe-S) centers, to quinones in the respiratory chain. The immediate electron acceptor for the enzyme in this species is believed to be ubiquinone. Couples the redox reaction to proton translocation (for every two electrons transferred, four hydrogen ions are translocated across the cytoplasmic membrane), and thus conserves the redox energy in a proton gradient. This chain is NADH-quinone oxidoreductase subunit D, found in Burkholderia ambifaria (strain ATCC BAA-244 / DSM 16087 / CCUG 44356 / LMG 19182 / AMMD) (Burkholderia cepacia (strain AMMD)).